Here is a 375-residue protein sequence, read N- to C-terminus: WAT1-related protein At1g70260 (375 aa).

A run of 10 helical transmembrane segments spans residues 10–30, 41–61, 72–92, 106–126, 143–163, 191–211, 225–245, 259–278, 289–309, and 312–332; these read LVPFVAMAIMEACTIALTIMA, FVFVVYTNAFGSILLLPFSFL, IFSWPLLVRVFFLGFTGIFMF, IVVCAMGLQIPSFSFLLSIIL, MGTIVSLSGAFVEELYKGPFI, WFLGCIFLAVAVFSVSLFNVV, VASFYSIVGTIQCLLFSLFME, LYLIIATGTFGSVIRTSVHV, VPLFKPFGIFWATLFGTSFFV, and LHYGSVLGAAIAGVGYFTVSW. One can recognise an EamA domain in the interval 25–134; that stretch reads ALTIMAKTAL…ILGRSKLDWR (110 aa). Residues 337-356 form a disordered region; that stretch reads ESEEKQSSNEERKSIKTIHH.

Belongs to the drug/metabolite transporter (DMT) superfamily. Plant drug/metabolite exporter (P-DME) (TC 2.A.7.4) family.

The protein localises to the membrane. In Arabidopsis thaliana (Mouse-ear cress), this protein is WAT1-related protein At1g70260.